The primary structure comprises 529 residues: Keratin, type II cytoskeletal 74 (529 aa).

The tract at residues 1-139 (MSRQLNIKSS…DPEIQKVRAQ (139 aa)) is head. Residues 140 to 175 (EREQIKVLNDKFASFIDKVRFLEQQNQVLETKWELL) form a coil 1A region. Positions 140–453 (EREQIKVLND…KLLEGEECRM (314 aa)) constitute an IF rod domain. Positions 176–194 (QQLDLNNCKKNLEPILEGY) are linker 1. The tract at residues 195-286 (ISNLRKQLET…CLYDAEIAQI (92 aa)) is coil 1B. The tract at residues 287–310 (QTHASETSVILSMDNNRDLDLDSI) is linker 12. The interval 311 to 449 (IAEVRMHYEE…ATYRKLLEGE (139 aa)) is coil 2. The tract at residues 450 to 529 (ECRMSGENPS…ASIPARKATR (80 aa)) is tail. A compositionally biased stretch (low complexity) spans 484 to 500 (GASAVAGSSGSTQSGQT). The interval 484–529 (GASAVAGSSGSTQSGQTKTTEARGGDLKDTQGKSTPASIPARKATR) is disordered. Basic and acidic residues predominate over residues 503–514 (TEARGGDLKDTQ). Threonine 513 bears the Phosphothreonine mark.

The protein belongs to the intermediate filament family. As to quaternary structure, heterotetramer of two type I and two type II keratins. In terms of tissue distribution, highly expressed in hair follicles from scalp. In hair, it is specifically present in the inner root sheath (IRS) of the hair follicle. Present in the IRS Huxley layer, but not in Henle layer or cuticle of the IRS. In the IRS Huxley layer, it is expressed in specialized Huxley cells, termed 'Fluegelzellen, along the area of differentiated Henle cells (at protein level).

In terms of biological role, has a role in hair formation. Specific component of keratin intermediate filaments in the inner root sheath (IRS) of the hair follicle. The protein is Keratin, type II cytoskeletal 74 (KRT74) of Homo sapiens (Human).